Consider the following 185-residue polypeptide: Chromobox protein homolog 1 (185 aa).

Glycyl lysine isopeptide (Lys-Gly) (interchain with G-Cter in SUMO2) cross-links involve residues lysine 9 and lysine 33. The region spanning 21–79 (YVVEKVLDRRVVKGKVEYLLKWKGFSDEDNTWEPEENLDCPDLIAEFLQSQKTAHETDK) is the Chromo 1 domain. Residues 63 to 124 (LIAEFLQSQK…RGLEPERIIG (62 aa)) form a disordered region. Residues 73–89 (TAHETDKSEGGKRKADS) are compositionally biased toward basic and acidic residues. Residues serine 89 and serine 91 each carry the phosphoserine modification. Basic and acidic residues predominate over residues 96–121 (EESKPKKKKEESEKPRGFARGLEPER). Glycyl lysine isopeptide (Lys-Gly) (interchain with G-Cter in SUMO2) cross-links involve residues lysine 99 and lysine 150. Positions 117–175 (LEPERIIGATDSSGELMFLMKWKNSDEADLVPAKEANVKCPQVVISFYEERLTWHSYPS) constitute a Chromo 2; shadow subtype domain. Serine 175 is subject to Phosphoserine.

Homodimer. Interacts directly with CHAF1A, EMSY, LBR, TIF1/TIF1A and TRIM28/TIF1B PXVXL motif via the chromoshadow domain. Interacts directly with histone H3 methylated at 'Lys-9' via the chromo domain. Interacts with SUV39H1 and SETDB1, KMT5B and KMT5C. Interacts with PRDM6. Interacts with POGZ. Interacts with CHAMP1. Interacts with INCENP. Interacts with SGO1; the CBX1 homodimer binds to one molecule of SGO1. Interacts with LRIF1 (via PxVxL motif). Interacts with HDGFL2. Interacts with CHD3. Interacts with CHD4. In terms of processing, not phosphorylated. Ubiquitinated. Expressed in all adult and embryonic tissues.

It localises to the nucleus. Its function is as follows. Component of heterochromatin. Recognizes and binds histone H3 tails methylated at 'Lys-9', leading to epigenetic repression. Interaction with lamin B receptor (LBR) can contribute to the association of the heterochromatin with the inner nuclear membrane. The protein is Chromobox protein homolog 1 (CBX1) of Homo sapiens (Human).